The following is a 2271-amino-acid chain: Serine-rich adhesin for platelets (2271 aa).

The first 89 residues, 1–89 (MSKRQKAFHD…VNMLHDQQAF (89 aa)), serve as a signal peptide directing secretion. The tract at residues 90–230 (AASDAPLTSE…KTSTTSTSTA (141 aa)) is serine-rich repeat region 1, SRR1. Residues 100–111 (LNTQSETVGNQN) show a composition bias toward polar residues. Disordered regions lie at residues 100-229 (LNTQ…STST), 751-791 (NSMS…VVST), and 806-2243 (SVSA…GLLG). A compositionally biased stretch (low complexity) spans 112–128 (STTIEASTSTADSTSVT). Over residues 129-140 (KNSSSVQTSNSD) the composition is skewed to polar residues. Residues 150-229 (VTSTTNSTSN…NKTSTTSTST (80 aa)) show a composition bias toward low complexity. The interval 231–751 (PVKLRTFSRL…TTFKYEVTRN (521 aa)) is non-repeat region (NRR). Composition is skewed to low complexity over residues 752-791 (SMSD…VVST), 806-1392 (SVSA…LSLS), and 1402-2214 (SNSA…ATSE). Residues 752–2232 (SMSDSVSTSG…AQSEKRLPDT (1481 aa)) form a serine-rich repeat region 2, SRR2 region. An LPXTG sorting signal motif is present at residues 2229-2233 (LPDTG). At Thr-2232 the chain carries Pentaglycyl murein peptidoglycan amidated threonine. A propeptide spans 2233–2271 (GDSIKQNGLLGGVMTLLVGLGLMKRKKKKDENDQDDSQA) (removed by sortase).

It belongs to the serine-rich repeat protein (SRRP) family. In terms of processing, proteolytically cleaved by a metalloprotease. Post-translationally, glycosylated. It is probable that most of the Ser residues in SSR1 and SSR2 are O-GlcNAcylated. Sequential glycosylation by sugar transferases are able to generate complex sugar polymorphisms.

The protein localises to the secreted. It localises to the cell wall. Mediates binding to human platelets, possibly through a receptor-ligand interaction. Probably associated with virulence in endovascular infection. This Staphylococcus aureus (strain Mu50 / ATCC 700699) protein is Serine-rich adhesin for platelets (sraP).